The primary structure comprises 113 residues: Ubiquinol-cytochrome-c reductase complex assembly factor 4 (113 aa).

The signal sequence occupies residues 1-18 (MWGSLCKAPLLRLRPTFA). Over 19–72 (AVSNVKTIHIKASPDYNEGIDKSKPLKFSTSKASHRHWTVAKSLGSNQQRPWWK) the chain is Mitochondrial matrix. Residues 73–89 (VVPLSVFLTTVLLWAIF) traverse the membrane as a helical segment. Residues 90–113 (RKETDIDEAIYKPIEQLQDESENK) are Mitochondrial intermembrane-facing.

Belongs to the UQCC4 family.

The protein resides in the mitochondrion inner membrane. In terms of biological role, required for the assembly and stability of the mitochondrial ubiquinol-cytochrome c reductase complex (complex III (CIII) or cytochrome b-c1 complex), a multisubunit transmembrane complex that is part of the mitochondrial electron transport chain (ETC) which drives oxidative phosphorylation. The polypeptide is Ubiquinol-cytochrome-c reductase complex assembly factor 4 (uqcc4) (Xenopus tropicalis (Western clawed frog)).